The chain runs to 437 residues: Epsilon-sarcoglycan (437 aa).

The Extracellular segment spans residues methionine 1–phenylalanine 317. The N-linked (GlcNAc...) asparagine glycan is linked to asparagine 200. The helical transmembrane segment at leucine 318–isoleucine 338 threads the bilayer. The Cytoplasmic portion of the chain corresponds to methionine 339–proline 437.

It belongs to the sarcoglycan alpha/epsilon family. In terms of processing, N-glycosylated. Ubiquitinated, leading to its degradation by the proteasome. In terms of tissue distribution, in both neural tissues including cerebellar cortex, striatum, cerebral cortex, thalamus and hippocampus, and non-neural tissues including quadriceps muscle, liver, kidney, spleen, lung, testis and heart. Widely distributed in the brain, with a robust signal obtained from regions with dense neuronal packing such as the pyramidal cell layer of the hippocampus, cerebellar molecular layer, and cerebral cortex. Levels are highest in kidney, moderate in brain and lung, and low in skeletal muscle, liver, spleen and testis.

It localises to the cell membrane. Its subcellular location is the sarcolemma. The protein localises to the cytoplasm. The protein resides in the cytoskeleton. It is found in the cell projection. It localises to the dendrite. Its subcellular location is the golgi apparatus. Functionally, component of the sarcoglycan complex, a subcomplex of the dystrophin-glycoprotein complex which forms a link between the F-actin cytoskeleton and the extracellular matrix. The chain is Epsilon-sarcoglycan from Rattus norvegicus (Rat).